The following is a 329-amino-acid chain: GTP 3',8-cyclase (329 aa).

Residues 8–234 form the Radical SAM core domain; it reads AFARKYYYLR…QLRQRSDGPA (227 aa). Position 17 (Arg17) interacts with GTP. [4Fe-4S] cluster is bound by residues Cys24 and Cys28. Tyr30 serves as a coordination point for S-adenosyl-L-methionine. Cys31 contributes to the [4Fe-4S] cluster binding site. Arg68 serves as a coordination point for GTP. Gly72 serves as a coordination point for S-adenosyl-L-methionine. Thr99 is a GTP binding site. Residue Ser123 coordinates S-adenosyl-L-methionine. Lys160 is a GTP binding site. Met194 provides a ligand contact to S-adenosyl-L-methionine. [4Fe-4S] cluster is bound by residues Cys257 and Cys260. 262-264 provides a ligand contact to GTP; the sequence is RLR. Residue Cys274 participates in [4Fe-4S] cluster binding.

This sequence belongs to the radical SAM superfamily. MoaA family. In terms of assembly, monomer and homodimer. The cofactor is [4Fe-4S] cluster.

The enzyme catalyses GTP + AH2 + S-adenosyl-L-methionine = (8S)-3',8-cyclo-7,8-dihydroguanosine 5'-triphosphate + 5'-deoxyadenosine + L-methionine + A + H(+). It functions in the pathway cofactor biosynthesis; molybdopterin biosynthesis. Functionally, catalyzes the cyclization of GTP to (8S)-3',8-cyclo-7,8-dihydroguanosine 5'-triphosphate. The chain is GTP 3',8-cyclase from Escherichia coli O17:K52:H18 (strain UMN026 / ExPEC).